A 338-amino-acid polypeptide reads, in one-letter code: Tagatose 1,6-diphosphate aldolase (338 aa).

It belongs to the aldolase LacD family.

It carries out the reaction D-tagatofuranose 1,6-bisphosphate = D-glyceraldehyde 3-phosphate + dihydroxyacetone phosphate. It functions in the pathway carbohydrate metabolism; D-tagatose 6-phosphate degradation; D-glyceraldehyde 3-phosphate and glycerone phosphate from D-tagatose 6-phosphate: step 2/2. The protein is Tagatose 1,6-diphosphate aldolase of Listeria monocytogenes serotype 4b (strain CLIP80459).